The sequence spans 266 residues: Large ribosomal subunit protein uL2m (266 aa).

It belongs to the universal ribosomal protein uL2 family.

The protein localises to the mitochondrion. The polypeptide is Large ribosomal subunit protein uL2m (mrpl2) (Dictyostelium citrinum (Slime mold)).